A 162-amino-acid polypeptide reads, in one-letter code: Tegument protein BLRF2 (162 aa).

The stretch at 12–43 (VKAVDMSMEDMAARLARLESENKALKQQVLRG) forms a coiled coil. The segment at 118 to 162 (SMLGAKGQPSPGEGTRPRESNDPNATRRARSRSRGREAKKVQISD) is disordered. Over residues 151-162 (RGREAKKVQISD) the composition is skewed to basic and acidic residues.

This sequence belongs to the herpesviridae BLRF2 family. In terms of assembly, homooligomer; homooligomerizes and binds double-stranded DNA (dsDNA) cooperatively. Interacts with host CGAS.

It is found in the virion tegument. It localises to the host cytoplasm. In terms of biological role, plays a role in the inhibition of host innate immune system by targeting the CGAS enzymatic activity which is the principal cytosolic DNA sensor that detects invading viral DNA. Acts by inhibiting CGAS-DNA phase separation: directly binds double-stranded DNA (dsDNA) in a length dependent but sequence independent manner and is able to form DNA-induced phase separation in infected cells. DNA phase separation of ORF52 mediates disruption of liquid-like droplets in which CGAS is activated, thereby preventing CGAS activity. In Homo sapiens (Human), this protein is Tegument protein BLRF2.